The sequence spans 73 residues: MAKKEDTIVLEGRVEELLPGMHFRVMLENGVPITAHLCGKMRMSNIRLLVGDRVTVEMSTYDLTKARVVYRHR.

Positions 1-73 (MAKKEDTIVL…TKARVVYRHR (73 aa)) constitute an S1-like domain.

Belongs to the IF-1 family. As to quaternary structure, component of the 30S ribosomal translation pre-initiation complex which assembles on the 30S ribosome in the order IF-2 and IF-3, IF-1 and N-formylmethionyl-tRNA(fMet); mRNA recruitment can occur at any time during PIC assembly.

The protein localises to the cytoplasm. Functionally, one of the essential components for the initiation of protein synthesis. Stabilizes the binding of IF-2 and IF-3 on the 30S subunit to which N-formylmethionyl-tRNA(fMet) subsequently binds. Helps modulate mRNA selection, yielding the 30S pre-initiation complex (PIC). Upon addition of the 50S ribosomal subunit IF-1, IF-2 and IF-3 are released leaving the mature 70S translation initiation complex. The chain is Translation initiation factor IF-1 from Chlamydia muridarum (strain MoPn / Nigg).